Here is a 504-residue protein sequence, read N- to C-terminus: Arrestin-related trafficking adapter 10 (504 aa).

It belongs to the ART10 family.

The protein localises to the cytoplasm. In terms of biological role, may regulate endocytosis by recruiting RSP5 ubiquitin ligase activity to specific plasma membrane proteins in response to extracellular stimuli. This Candida glabrata (strain ATCC 2001 / BCRC 20586 / JCM 3761 / NBRC 0622 / NRRL Y-65 / CBS 138) (Yeast) protein is Arrestin-related trafficking adapter 10 (ART10).